The chain runs to 247 residues: ATP synthase subunit a, chloroplastic (247 aa).

A run of 5 helical transmembrane segments spans residues 38–58 (QVLI…IIAV), 95–115 (VPFI…GALL), 134–154 (INTT…AGLT), 199–219 (LVVV…VMFL), and 220–240 (GLFT…AYIG).

It belongs to the ATPase A chain family. In terms of assembly, F-type ATPases have 2 components, CF(1) - the catalytic core - and CF(0) - the membrane proton channel. CF(1) has five subunits: alpha(3), beta(3), gamma(1), delta(1), epsilon(1). CF(0) has four main subunits: a, b, b' and c.

Its subcellular location is the plastid. It localises to the chloroplast thylakoid membrane. Key component of the proton channel; it plays a direct role in the translocation of protons across the membrane. This chain is ATP synthase subunit a, chloroplastic, found in Ranunculus macranthus (Large buttercup).